The following is a 100-amino-acid chain: A-type ATP synthase subunit F (100 aa).

The protein belongs to the V-ATPase F subunit family. As to quaternary structure, has multiple subunits with at least A(3), B(3), C, D, E, F, H, I and proteolipid K(x).

The protein localises to the cell membrane. Functionally, component of the A-type ATP synthase that produces ATP from ADP in the presence of a proton gradient across the membrane. This chain is A-type ATP synthase subunit F, found in Methanoregula boonei (strain DSM 21154 / JCM 14090 / 6A8).